The sequence spans 207 residues: Urease accessory protein UreG (207 aa).

Residue 14–21 (GPVGSGKT) coordinates GTP.

Belongs to the SIMIBI class G3E GTPase family. UreG subfamily. As to quaternary structure, homodimer. UreD, UreF and UreG form a complex that acts as a GTP-hydrolysis-dependent molecular chaperone, activating the urease apoprotein by helping to assemble the nickel containing metallocenter of UreC. The UreE protein probably delivers the nickel.

Its subcellular location is the cytoplasm. In terms of biological role, facilitates the functional incorporation of the urease nickel metallocenter. This process requires GTP hydrolysis, probably effectuated by UreG. This is Urease accessory protein UreG from Rhodopseudomonas palustris (strain BisB18).